Here is a 904-residue protein sequence, read N- to C-terminus: Phosphoenolpyruvate carboxylase (904 aa).

The interval 52 to 71 (ISRRESDAPPSTLSEQLTGR) is disordered. A compositionally biased stretch (polar residues) spans 60–70 (PPSTLSEQLTG). Residues His151 and Lys570 contribute to the active site.

Belongs to the PEPCase type 1 family. Mg(2+) serves as cofactor.

It carries out the reaction oxaloacetate + phosphate = phosphoenolpyruvate + hydrogencarbonate. Functionally, forms oxaloacetate, a four-carbon dicarboxylic acid source for the tricarboxylic acid cycle. The chain is Phosphoenolpyruvate carboxylase from Xanthomonas euvesicatoria pv. vesicatoria (strain 85-10) (Xanthomonas campestris pv. vesicatoria).